A 493-amino-acid polypeptide reads, in one-letter code: Neisserial heparin binding antigen (493 aa).

The signal sequence occupies residues 1–22 (MKEMMMFKRSVIAMACIFALSA). Cys-23 carries N-palmitoyl cysteine lipidation. A lipid anchor (S-diacylglycerol cysteine) is attached at Cys-23. The tract at residues 27–206 (GGGSPDVKSA…NPAPANGGSN (180 aa)) is disordered. Positions 48 to 58 (SEKETEAKEDA) are enriched in basic and acidic residues. Positions 59-75 (PQAGSQGQGAPSAQGSQ) are enriched in low complexity. Polar residues-rich tracts occupy residues 106 to 123 (DMPQ…NHTP) and 132 to 147 (MENQ…QPAN). Over residues 165–188 (AGGQNAGNTAAQGANQAGNNQAAG) the composition is skewed to low complexity. The short motif at 301 to 311 (RFRRSARSRRS) is the Arg-rich motif element.

This sequence belongs to the NHBA family. The C-terminal beta-barrel forms a monomer. Post-translationally, cleaved in vivo by the Neisserial phase-variable autotransporter/serine protease NalP to give 2 fragments. The N-terminus remains in the cell outer membrane while the C-terminus (beginning on Ser-298) is soluble; this soluble fragment is called C2. Cleaved in vitro by human lactoferrin (LTF, between Arg-310 and Ser-311), this fragment is called C1. Recombinant and cell surface protein is cleaved by human saliva kallikrein (KLK1) between Ser-308 and Arg-309; in saliva kallikrein is more active on NHBA than lactoferrin. Human plasma kallikrein (KLKB1) cleaves in a similar manner to KLK1.

It localises to the cell outer membrane. In terms of biological role, a major human immunogenic protein detected in patients recovering from meningitidis, where it induces bactericidal antibodies. Binds human cells, heparin and heparan sulfate proteoglycan in vitro via the Arg-rich motif. Heparin-binding to this protein protects bacteria against killing by bactericidal antibodies (serum killing). The bacteria binds a number of human extracellular sialyated and/or sulfated glycans via this protein, including chondroitin sulfate, heparin and ganglioside GT3. Whole protein binds DNA. Functionally, plays a role in extracellular-DNA (eDNA) mediated biofilm formation. In some strains (including cc32 strain H44/76 but not cc11 strain B16B6) eDNA stimulates biofilm formation. When NHBA is not processed by NalP, biofilm formation increases. This is probably because the number of positively charged, NHBA- and IgA-derived DNA-binding peptides on the cell surface rises, resulting in increased DNA-binding peptides and increased biofilm formation. The protein is Neisserial heparin binding antigen of Neisseria meningitidis serogroup B / serotype 15 (strain H44/76).